We begin with the raw amino-acid sequence, 365 residues long: Terpene cyclase 4 (365 aa).

The segment covering 1–11 (MVPSLITPPPS) has biased composition (pro residues). A disordered region spans residues 1–20 (MVPSLITPPPSRSGEATPQK). 3 residues coordinate Mg(2+): Asp-118, Asn-260, and Ser-264. Positions 118-122 (DDPFD) match the D(D/E)XX(D/E) motif motif. Residues 260–268 (NDLCSYRKD) carry the NSE motif motif. Residues 341–348 (WSLYTFRY) carry the WxxxxxRY motif motif. Residues Arg-347 and Tyr-348 each coordinate (2E,6E)-farnesyl diphosphate.

This sequence belongs to the terpene synthase family. Homodimer. The cofactor is Mg(2+).

The catalysed reaction is (2E,6E)-farnesyl diphosphate + H2O = koraiol + diphosphate. It functions in the pathway sesquiterpene biosynthesis. In terms of biological role, terpene cyclase that catalyzes the cyclization of farnesyl diphosphate (FPP) to the sesquiterpene koraiol. The chain is Terpene cyclase 4 from Gibberella fujikuroi (strain CBS 195.34 / IMI 58289 / NRRL A-6831) (Bakanae and foot rot disease fungus).